The following is a 126-amino-acid chain: Fluoride-specific ion channel FluC 2 (126 aa).

4 helical membrane-spanning segments follow: residues 7–27 (MWVG…GLSI), 37–57 (LGTF…SILF), 65–85 (YGDL…TTFS), and 101–121 (AIAA…AAFG). Residues glycine 79 and threonine 82 each contribute to the Na(+) site.

Belongs to the fluoride channel Fluc/FEX (TC 1.A.43) family.

It localises to the cell inner membrane. It catalyses the reaction fluoride(in) = fluoride(out). Na(+) is not transported, but it plays an essential structural role and its presence is essential for fluoride channel function. Functionally, fluoride-specific ion channel. Important for reducing fluoride concentration in the cell, thus reducing its toxicity. The protein is Fluoride-specific ion channel FluC 2 of Yersinia pseudotuberculosis serotype I (strain IP32953).